Reading from the N-terminus, the 371-residue chain is Tetraacyldisaccharide 4'-kinase (371 aa).

48–55 (SAGGTGKT) lines the ATP pocket.

The protein belongs to the LpxK family.

It catalyses the reaction a lipid A disaccharide + ATP = a lipid IVA + ADP + H(+). Its pathway is glycolipid biosynthesis; lipid IV(A) biosynthesis; lipid IV(A) from (3R)-3-hydroxytetradecanoyl-[acyl-carrier-protein] and UDP-N-acetyl-alpha-D-glucosamine: step 6/6. Functionally, transfers the gamma-phosphate of ATP to the 4'-position of a tetraacyldisaccharide 1-phosphate intermediate (termed DS-1-P) to form tetraacyldisaccharide 1,4'-bis-phosphate (lipid IVA). The sequence is that of Tetraacyldisaccharide 4'-kinase from Chlorobium chlorochromatii (strain CaD3).